Here is a 226-residue protein sequence, read N- to C-terminus: Protein-L-isoaspartate O-methyltransferase (226 aa).

The active site involves Ser75.

The protein belongs to the methyltransferase superfamily. L-isoaspartyl/D-aspartyl protein methyltransferase family.

The protein resides in the cytoplasm. The enzyme catalyses [protein]-L-isoaspartate + S-adenosyl-L-methionine = [protein]-L-isoaspartate alpha-methyl ester + S-adenosyl-L-homocysteine. Its function is as follows. Catalyzes the methyl esterification of L-isoaspartyl residues in peptides and proteins that result from spontaneous decomposition of normal L-aspartyl and L-asparaginyl residues. It plays a role in the repair and/or degradation of damaged proteins. This chain is Protein-L-isoaspartate O-methyltransferase, found in Lawsonia intracellularis (strain PHE/MN1-00).